Reading from the N-terminus, the 1015-residue chain is DExH-box ATP-dependent RNA helicase DExH8 (1015 aa).

Residues 36–197 (IDKILENRVT…FKELGRGERV (162 aa)) form the Helicase ATP-binding domain. 49–56 (GEPGCGKS) is an ATP binding site. Residues 144-147 (DEVH) carry the DEVH box motif. Positions 254–419 (LIHDLILYIH…KLSLRQQVLH (166 aa)) constitute a Helicase C-terminal domain. C3H1-type zinc fingers lie at residues 727–753 (YGEA…THTL) and 754–782 (QSTR…HAMR).

The protein belongs to the DExH box helicase family.

The catalysed reaction is ATP + H2O = ADP + phosphate + H(+). This Arabidopsis thaliana (Mouse-ear cress) protein is DExH-box ATP-dependent RNA helicase DExH8.